The primary structure comprises 284 residues: MTDSSSASDPTAGPVDPGPAPSAPDPALEDPASTPANGHHPNQADSFNMEQQMKIGEPEDNAGLLESSMRLKPHEAQSYRKKALWVSWVSIVVTMILAIAAFTVSIMRHSASAFGFAFDATLDVLSSIIVLWRYSNAAAVHSAHREYIACVILGVVFILSAITILVKAIHDLATKLEPEVDDFLYSVSVISGVVCTVLCVCKFMLGKVLTSRALITDGFNSLVGGVMGFSILISAEVFKHEPSVWFLDGTIGILIGLIILAYGVKLLKDMVPRIRQTRHYERFE.

Residues 1–44 form a disordered region; sequence MTDSSSASDPTAGPVDPGPAPSAPDPALEDPASTPANGHHPNQA. The Cytoplasmic portion of the chain corresponds to 1–83; that stretch reads MTDSSSASDP…HEAQSYRKKA (83 aa). A helical membrane pass occupies residues 84 to 104; that stretch reads LWVSWVSIVVTMILAIAAFTV. Topologically, residues 105-111 are extracellular; it reads SIMRHSA. Residues 112–132 form a helical membrane-spanning segment; that stretch reads SAFGFAFDATLDVLSSIIVLW. Over 133–145 the chain is Cytoplasmic; the sequence is RYSNAAAVHSAHR. The helical transmembrane segment at 146 to 166 threads the bilayer; sequence EYIACVILGVVFILSAITILV. The Extracellular segment spans residues 167 to 182; that stretch reads KAIHDLATKLEPEVDD. A helical membrane pass occupies residues 183-203; the sequence is FLYSVSVISGVVCTVLCVCKF. Over 204-212 the chain is Cytoplasmic; the sequence is MLGKVLTSR. A helical transmembrane segment spans residues 213–233; sequence ALITDGFNSLVGGVMGFSILI. Residues 234-243 are Extracellular-facing; the sequence is SAEVFKHEPS. The helical transmembrane segment at 244 to 264 threads the bilayer; that stretch reads VWFLDGTIGILIGLIILAYGV. Topologically, residues 265-284 are cytoplasmic; the sequence is KLLKDMVPRIRQTRHYERFE.

Belongs to the TMEM163 family.

It is found in the cytoplasmic vesicle. Its subcellular location is the secretory vesicle. The protein resides in the synaptic vesicle membrane. The protein localises to the early endosome membrane. It localises to the late endosome membrane. It is found in the lysosome membrane. Its subcellular location is the cell membrane. It carries out the reaction Zn(2+)(in) = Zn(2+)(out). Functionally, zinc ion transporter that mediates zinc efflux and plays a crucial role in intracellular zinc homeostasis. Binds the divalent cations Zn(2+), Ni(2+), and to a minor extent Cu(2+). Is a functional modulator of P2X purinoceptors, including P2RX1, P2RX3, P2RX4 and P2RX7. Plays a role in central nervous system development and is required for myelination, and survival and proliferation of oligodendrocytes. The sequence is that of Transmembrane protein 163b from Danio rerio (Zebrafish).